The following is a 195-amino-acid chain: 3-isopropylmalate dehydratase small subunit (195 aa).

This sequence belongs to the LeuD family. LeuD type 1 subfamily. In terms of assembly, heterodimer of LeuC and LeuD.

The catalysed reaction is (2R,3S)-3-isopropylmalate = (2S)-2-isopropylmalate. It participates in amino-acid biosynthesis; L-leucine biosynthesis; L-leucine from 3-methyl-2-oxobutanoate: step 2/4. Its function is as follows. Catalyzes the isomerization between 2-isopropylmalate and 3-isopropylmalate, via the formation of 2-isopropylmaleate. The protein is 3-isopropylmalate dehydratase small subunit of Rubrobacter xylanophilus (strain DSM 9941 / JCM 11954 / NBRC 16129 / PRD-1).